Reading from the N-terminus, the 336-residue chain is Dihydroorotate dehydrogenase (quinone) (336 aa).

FMN contacts are provided by residues 62–66 and T86; that span reads AGLDK. K66 is a binding site for substrate. 111-115 provides a ligand contact to substrate; sequence NRMGF. N139 and N172 together coordinate FMN. Residue N172 participates in substrate binding. The active-site Nucleophile is the S175. N177 contacts substrate. 2 residues coordinate FMN: K217 and T245. 246–247 serves as a coordination point for substrate; it reads NT. Residues G268, G297, and 318–319 each bind FMN; that span reads YS.

Belongs to the dihydroorotate dehydrogenase family. Type 2 subfamily. Monomer. The cofactor is FMN.

It localises to the cell membrane. The enzyme catalyses (S)-dihydroorotate + a quinone = orotate + a quinol. Its pathway is pyrimidine metabolism; UMP biosynthesis via de novo pathway; orotate from (S)-dihydroorotate (quinone route): step 1/1. Functionally, catalyzes the conversion of dihydroorotate to orotate with quinone as electron acceptor. This chain is Dihydroorotate dehydrogenase (quinone), found in Klebsiella pneumoniae subsp. pneumoniae (strain ATCC 700721 / MGH 78578).